The sequence spans 415 residues: Adipocyte plasma membrane-associated protein (415 aa).

Positions 1–29 are disordered; that stretch reads MSEADGLRQRRPLRPQVVTDDGQVPEVKE. An N-acetylserine modification is found at S2. The Cytoplasmic segment spans residues 2–39; the sequence is SEADGLRQRRPLRPQVVTDDGQVPEVKEGSSFSGRVFR. T19 is modified (phosphothreonine). A helical; Signal-anchor for type II membrane protein membrane pass occupies residues 40 to 60; the sequence is MTFLMLAVSLAIPLLGAMMLL. Residues 61-415 lie on the Extracellular side of the membrane; sequence ESPIDPQSFS…FICRLSLQSI (355 aa). N-linked (GlcNAc...) asparagine glycosylation occurs at N159.

It belongs to the strictosidine synthase family. Post-translationally, glycosylated in vitro. As to expression, strongly expressed in adipose tissue. Highly expressed in liver, heart, and kidney. Expressed at intermediate level in brain and lung. Weakly expressed in spleen, skeletal muscle and testis.

The protein resides in the membrane. Its function is as follows. Exhibits strong arylesterase activity with beta-naphthyl acetate and phenyl acetate. May play a role in adipocyte differentiation. This chain is Adipocyte plasma membrane-associated protein (Apmap), found in Mus musculus (Mouse).